A 158-amino-acid chain; its full sequence is Putative pre-16S rRNA nuclease (158 aa).

It belongs to the YqgF nuclease family.

It localises to the cytoplasm. Its function is as follows. Could be a nuclease involved in processing of the 5'-end of pre-16S rRNA. This Hahella chejuensis (strain KCTC 2396) protein is Putative pre-16S rRNA nuclease.